A 435-amino-acid chain; its full sequence is T-box transcription factor T (435 aa).

A DNA-binding region (T-box) is located at residues 51–219 (LWLRFKELTN…YNPFAKAFLD (169 aa)). Disordered stretches follow at residues 280 to 310 (PALRNHRPSPYPSPYAHRNNSPTYSDNPSAC) and 384 to 412 (APLGHAVPAPSASGSPLYEGAPTATDVPD). Polar residues predominate over residues 297 to 310 (RNNSPTYSDNPSAC).

Monomer. Binds DNA as a monomer.

Its subcellular location is the nucleus. In terms of biological role, involved in the transcriptional regulation of genes required for mesoderm formation and differentiation. Binds to a palindromic site (called T site) and activates gene transcription when bound to such a site. The polypeptide is T-box transcription factor T (Canis lupus familiaris (Dog)).